Here is a 290-residue protein sequence, read N- to C-terminus: uncharacterized protein (290 aa).

It belongs to the UreD family.

It localises to the cytoplasm. The protein resides in the nucleus. Functionally, probably facilitates nickel incorporation. This is an uncharacterized protein from Schizosaccharomyces pombe (strain 972 / ATCC 24843) (Fission yeast).